Reading from the N-terminus, the 314-residue chain is Olfactory receptor 4K2 (314 aa).

The Extracellular segment spans residues 1–25; the sequence is MDVGNKSTMSEFVLLGLSNSWELQM. The N-linked (GlcNAc...) asparagine glycan is linked to N5. Residues 26 to 49 traverse the membrane as a helical segment; it reads FFFMVFSLLYVATMVGNSLIVITV. Residues 50-57 lie on the Cytoplasmic side of the membrane; the sequence is IVDPHLHS. Residues 58-79 form a helical membrane-spanning segment; sequence PMYFLLTNLSIIDMSLASFATP. The Extracellular portion of the chain corresponds to 80 to 100; that stretch reads KMITDYLTGHKTISFDGCLTQ. C97 and C189 are joined by a disulfide. A helical membrane pass occupies residues 101–120; that stretch reads IFFLHLFTGTEIILLMAMSF. The Cytoplasmic segment spans residues 121–139; sequence DRYIAICKPLHYASVISPQ. The helical transmembrane segment at 140-158 threads the bilayer; sequence VCVALVVASWIMGVMHSMS. Over 159–195 the chain is Extracellular; it reads QVIFALTLPFCGPYEVDSFFCDLPVVFQLACVDTYVL. A helical membrane pass occupies residues 196 to 219; that stretch reads GLFMISTSGIIALSCFIVLFNSYV. Over 220–235 the chain is Cytoplasmic; sequence IVLVTVKHHSSRGSSK. The helical transmembrane segment at 236–258 threads the bilayer; that stretch reads ALSTCTAHFIVVFLFFGPCIFIY. Residues 259-269 lie on the Extracellular side of the membrane; sequence MWPLSSFLTDK. The helical transmembrane segment at 270–289 threads the bilayer; it reads ILSVFYTIFTPTLNPIIYTL. Topologically, residues 290 to 314 are cytoplasmic; sequence RNQEVKIAMRKLKNRFLNFNKAMPS.

It belongs to the G-protein coupled receptor 1 family.

It localises to the cell membrane. Odorant receptor. The sequence is that of Olfactory receptor 4K2 (OR4K2) from Homo sapiens (Human).